We begin with the raw amino-acid sequence, 266 residues long: Undecaprenyl-diphosphatase (266 aa).

8 consecutive transmembrane segments (helical) span residues methionine 1–isoleucine 21, glutamine 39–phenylalanine 59, tryptophan 87–isoleucine 107, threonine 113–alanine 133, glycine 143–glycine 163, phenylalanine 187–leucine 207, alanine 218–leucine 238, and isoleucine 244–valine 264.

This sequence belongs to the UppP family.

Its subcellular location is the cell inner membrane. The enzyme catalyses di-trans,octa-cis-undecaprenyl diphosphate + H2O = di-trans,octa-cis-undecaprenyl phosphate + phosphate + H(+). In terms of biological role, catalyzes the dephosphorylation of undecaprenyl diphosphate (UPP). Confers resistance to bacitracin. This chain is Undecaprenyl-diphosphatase, found in Alteromonas mediterranea (strain DSM 17117 / CIP 110805 / LMG 28347 / Deep ecotype).